Consider the following 343-residue polypeptide: T-cell immunoglobulin and mucin domain-containing protein 4 (343 aa).

The signal sequence occupies residues 1 to 22 (MSKGLLLLWLVTELWWLYLTPA). In terms of domain architecture, Ig-like V-type spans 23-128 (ASEDTIIGFL…WFNDVKKNVR (106 aa)). Over 23–279 (ASEDTIIGFL…KSHQINSRQT (257 aa)) the chain is Extracellular. 3 cysteine pairs are disulfide-bonded: C40–C112, C53–C64, and C59–C111. An N-linked (GlcNAc...) asparagine glycan is attached at N220. A disordered region spans residues 239-258 (TGSNPGILPSTSQLTTQKTT). Over residues 248–258 (STSQLTTQKTT) the composition is skewed to low complexity. Residues 280–300 (ILIIACCVGFVLMVLLFLAFL) form a helical membrane-spanning segment. Residues 301 to 343 (LRGKVTGANCLQRHKRPDNTEDSDSVLNDMSHGRDDEDGIFTL) are Cytoplasmic-facing. The interval 313–343 (RHKRPDNTEDSDSVLNDMSHGRDDEDGIFTL) is disordered. A phosphoserine mark is found at S323, S325, and S331.

It belongs to the immunoglobulin superfamily. TIM family. As to quaternary structure, homodimer. Predominantly expressed in lymphoid tissues, such as spleen, lymph nodes, and Peyer patches. Also expressed in fetal liver, salivary gland, and spleen stromal cells, predominantly in the marginal zone and to a lesser extent throughout the white pulp. Not expressed in bone marrow-derived cells. Expressed mainly by antigen presenting cells (APCs) in T- and B-cell areas, but not by T- or B-lymphocytes.

The protein resides in the membrane. Phosphatidylserine receptor that plays different role in immune response including phagocytosis of apoptotic cells and T-cell regulation. Controls T-cell activation in a bimodal fashion, decreasing the activation of naive T-cells by inducing cell cycle arrest, while increasing proliferation of activated T-cells by activating AKT1 and ERK1/2 phosphorylations and subsequent signaling pathways. Also plays a role in efferocytosis which is the process by which apoptotic cells are removed by phagocytic cells. Mechanistically, promotes the engulfment of apoptotic cells or exogenous particles by securing them to phagocytes through direct binding to phosphatidylserine present on apoptotic cells, while other engulfment receptors such as MERTK efficiently recognize apoptotic cells and mediate their ingestion. Additionally, promotes autophagy process by suppressing NLRP3 inflammasome activity via activation of STK11/PRKAA1 pathway in a phosphatidylserine-dependent mechanism. The protein is T-cell immunoglobulin and mucin domain-containing protein 4 (Timd4) of Mus musculus (Mouse).